The primary structure comprises 361 residues: Beta-hexosaminidase (361 aa).

Substrate contacts are provided by residues Asp-69, Arg-77, Arg-144, and 174–175 (KH). Catalysis depends on His-187, which acts as the Proton donor/acceptor. Asp-258 serves as the catalytic Nucleophile.

This sequence belongs to the glycosyl hydrolase 3 family. NagZ subfamily.

It localises to the cytoplasm. The catalysed reaction is Hydrolysis of terminal non-reducing N-acetyl-D-hexosamine residues in N-acetyl-beta-D-hexosaminides.. It functions in the pathway cell wall biogenesis; peptidoglycan recycling. Its function is as follows. Plays a role in peptidoglycan recycling by cleaving the terminal beta-1,4-linked N-acetylglucosamine (GlcNAc) from peptide-linked peptidoglycan fragments, giving rise to free GlcNAc, anhydro-N-acetylmuramic acid and anhydro-N-acetylmuramic acid-linked peptides. In Neisseria meningitidis serogroup B (strain ATCC BAA-335 / MC58), this protein is Beta-hexosaminidase.